Consider the following 181-residue polypeptide: Ribosome maturation factor RimP (181 aa).

The protein belongs to the RimP family.

The protein resides in the cytoplasm. Required for maturation of 30S ribosomal subunits. The protein is Ribosome maturation factor RimP of Mycolicibacterium smegmatis (strain ATCC 700084 / mc(2)155) (Mycobacterium smegmatis).